A 619-amino-acid chain; its full sequence is ATP-dependent zinc metalloprotease FtsH 1 (619 aa).

Residues 1 to 8 (MADEKRPA) are Cytoplasmic-facing. The chain crosses the membrane as a helical span at residues 9-29 (SRAWLGYLLIAVGILVLSGIV). Over 30–108 (RSRGRPLVPY…RIEAKSPQTS (79 aa)) the chain is Periplasmic. The chain crosses the membrane as a helical span at residues 109–129 (VWMQVAIWMLPLVLINAAFFM). Over 130 to 619 (MLRRAGQGAG…KIAVGPPSAA (490 aa)) the chain is Cytoplasmic. 203–210 (GPPGTGKT) provides a ligand contact to ATP. Histidine 426 contacts Zn(2+). Glutamate 427 is an active-site residue. Histidine 430 and aspartate 503 together coordinate Zn(2+).

This sequence in the central section; belongs to the AAA ATPase family. The protein in the C-terminal section; belongs to the peptidase M41 family. As to quaternary structure, homohexamer. Requires Zn(2+) as cofactor.

The protein localises to the cell inner membrane. Its function is as follows. Acts as a processive, ATP-dependent zinc metallopeptidase for both cytoplasmic and membrane proteins. Plays a role in the quality control of integral membrane proteins. The polypeptide is ATP-dependent zinc metalloprotease FtsH 1 (Sorangium cellulosum (strain So ce56) (Polyangium cellulosum (strain So ce56))).